The primary structure comprises 295 residues: Phosphoribosylaminoimidazole-succinocarboxamide synthase (295 aa).

The protein belongs to the SAICAR synthetase family.

It catalyses the reaction 5-amino-1-(5-phospho-D-ribosyl)imidazole-4-carboxylate + L-aspartate + ATP = (2S)-2-[5-amino-1-(5-phospho-beta-D-ribosyl)imidazole-4-carboxamido]succinate + ADP + phosphate + 2 H(+). It functions in the pathway purine metabolism; IMP biosynthesis via de novo pathway; 5-amino-1-(5-phospho-D-ribosyl)imidazole-4-carboxamide from 5-amino-1-(5-phospho-D-ribosyl)imidazole-4-carboxylate: step 1/2. This Corynebacterium ammoniagenes (Brevibacterium ammoniagenes) protein is Phosphoribosylaminoimidazole-succinocarboxamide synthase.